The primary structure comprises 177 residues: Large ribosomal subunit protein uL6 (177 aa).

This sequence belongs to the universal ribosomal protein uL6 family. In terms of assembly, part of the 50S ribosomal subunit.

Its function is as follows. This protein binds to the 23S rRNA, and is important in its secondary structure. It is located near the subunit interface in the base of the L7/L12 stalk, and near the tRNA binding site of the peptidyltransferase center. The chain is Large ribosomal subunit protein uL6 from Rhodopseudomonas palustris (strain BisB18).